Consider the following 187-residue polypeptide: Protein GrpE (187 aa).

The segment at 1–30 (MEKKETKNETEKTNKQDNKNTKSQKKENLN) is disordered.

Belongs to the GrpE family. Homodimer.

The protein resides in the cytoplasm. Its function is as follows. Participates actively in the response to hyperosmotic and heat shock by preventing the aggregation of stress-denatured proteins, in association with DnaK and GrpE. It is the nucleotide exchange factor for DnaK and may function as a thermosensor. Unfolded proteins bind initially to DnaJ; upon interaction with the DnaJ-bound protein, DnaK hydrolyzes its bound ATP, resulting in the formation of a stable complex. GrpE releases ADP from DnaK; ATP binding to DnaK triggers the release of the substrate protein, thus completing the reaction cycle. Several rounds of ATP-dependent interactions between DnaJ, DnaK and GrpE are required for fully efficient folding. The chain is Protein GrpE from Borreliella afzelii (strain PKo) (Borrelia afzelii).